Here is a 388-residue protein sequence, read N- to C-terminus: L-lactate dehydrogenase (388 aa).

The FMN hydroxy acid dehydrogenase domain maps to 1 to 380 (MIISAASDYR…SADALSRVTR (380 aa)). Tyr24 provides a ligand contact to substrate. Residues Ser106 and Gln127 each coordinate FMN. Tyr129 is a substrate binding site. Thr155 provides a ligand contact to FMN. A substrate-binding site is contributed by Arg164. Lys251 serves as a coordination point for FMN. His275 acts as the Proton acceptor in catalysis. Substrate is bound at residue Arg278. Residue 306 to 330 (DSGIRSGLDVVRMLALGADAVLLGR) coordinates FMN.

It belongs to the FMN-dependent alpha-hydroxy acid dehydrogenase family. It depends on FMN as a cofactor.

The protein localises to the cell inner membrane. The catalysed reaction is (S)-lactate + A = pyruvate + AH2. Its function is as follows. Catalyzes the conversion of L-lactate to pyruvate. Is coupled to the respiratory chain. The sequence is that of L-lactate dehydrogenase from Xanthomonas axonopodis pv. citri (strain 306).